The primary structure comprises 609 residues: Glutamine--fructose-6-phosphate aminotransferase [isomerizing] (609 aa).

The active-site Nucleophile; for GATase activity is the C2. A Glutamine amidotransferase type-2 domain is found at 2–217; that stretch reads CGIVGAIAGR…DGDTAEIRRD (216 aa). SIS domains follow at residues 285 to 425 and 458 to 599; these read AESV…LRGA and WAEC…VDKP. K604 serves as the catalytic For Fru-6P isomerization activity.

In terms of assembly, homodimer.

It is found in the cytoplasm. It catalyses the reaction D-fructose 6-phosphate + L-glutamine = D-glucosamine 6-phosphate + L-glutamate. Its function is as follows. Catalyzes the first step in hexosamine metabolism, converting fructose-6P into glucosamine-6P using glutamine as a nitrogen source. In Xylella fastidiosa (strain 9a5c), this protein is Glutamine--fructose-6-phosphate aminotransferase [isomerizing].